The sequence spans 609 residues: Zinc metalloproteinase-disintegrin-like (609 aa).

An N-terminal signal peptide occupies residues 1–20; that stretch reads MIQVLLVTICLAALPYQGSS. Residues 21–189 constitute a propeptide that is removed on maturation; that stretch reads IILESGNVND…KKASQLVVTA (169 aa). The Peptidase M12B domain occupies 198 to 393; that stretch reads RFVELVLVVD…QNPECIVNEP (196 aa). Glutamate 201 and aspartate 285 together coordinate Ca(2+). Intrachain disulfides connect cysteine 308–cysteine 388, cysteine 348–cysteine 372, and cysteine 350–cysteine 355. Residue histidine 333 coordinates Zn(2+). Glutamate 334 is a catalytic residue. Residues histidine 337 and histidine 343 each contribute to the Zn(2+) site. N-linked (GlcNAc...) asparagine glycosylation occurs at asparagine 371. 8 residues coordinate Ca(2+): cysteine 388, asparagine 391, valine 403, asparagine 406, leucine 408, glutamate 410, glutamate 413, and aspartate 416. Residues 401–487 form the Disintegrin domain; the sequence is PPVCGNELLE…ECPADVFHKN (87 aa). 14 disulfide bridges follow: cysteine 404–cysteine 433, cysteine 415–cysteine 428, cysteine 417–cysteine 423, cysteine 427–cysteine 450, cysteine 441–cysteine 447, cysteine 446–cysteine 472, cysteine 459–cysteine 479, cysteine 466–cysteine 498, cysteine 491–cysteine 503, cysteine 510–cysteine 560, cysteine 525–cysteine 571, cysteine 538–cysteine 548, cysteine 555–cysteine 597, and cysteine 591–cysteine 602. A D/ECD-tripeptide motif is present at residues 465–467; that stretch reads ECD. Ca(2+) is bound by residues aspartate 467, proline 468, glutamate 470, aspartate 482, and valine 483.

This sequence belongs to the venom metalloproteinase (M12B) family. P-III subfamily. P-IIIa sub-subfamily. In terms of assembly, monomer. Zn(2+) serves as cofactor. As to expression, expressed by the venom gland.

It localises to the secreted. Its function is as follows. This protein is a zinc metalloprotease from snake venom that possesses hemorrhagic activity. The sequence is that of Zinc metalloproteinase-disintegrin-like from Crotalus durissus durissus (Central American rattlesnake).